The primary structure comprises 56 residues: Stable protein 1 (56 aa).

A Stress-response A/B barrel domain is found at 1–44 (GYTHAFESTFESKSGLQEYLDSAALAAFAEGFLPTLSQRSFNWG).

In Populus euphratica (Euphrates poplar), this protein is Stable protein 1.